Here is a 352-residue protein sequence, read N- to C-terminus: Holliday junction branch migration complex subunit RuvB (352 aa).

Residues 4–185 (ADRLIAATGP…FGIVQRLEFY (182 aa)) are large ATPase domain (RuvB-L). Residues I24, R25, G66, K69, T70, T71, 132–134 (EDF), R175, Y185, and R222 each bind ATP. Position 70 (T70) interacts with Mg(2+). The segment at 186-256 (STADLATIVS…VADLALNLLD (71 aa)) is small ATPAse domain (RuvB-S). The interval 259 to 352 (EHGFDHQDRR…VDEFLDAVDD (94 aa)) is head domain (RuvB-H). 3 residues coordinate DNA: R295, R314, and R319.

This sequence belongs to the RuvB family. As to quaternary structure, homohexamer. Forms an RuvA(8)-RuvB(12)-Holliday junction (HJ) complex. HJ DNA is sandwiched between 2 RuvA tetramers; dsDNA enters through RuvA and exits via RuvB. An RuvB hexamer assembles on each DNA strand where it exits the tetramer. Each RuvB hexamer is contacted by two RuvA subunits (via domain III) on 2 adjacent RuvB subunits; this complex drives branch migration. In the full resolvosome a probable DNA-RuvA(4)-RuvB(12)-RuvC(2) complex forms which resolves the HJ.

The protein resides in the cytoplasm. It carries out the reaction ATP + H2O = ADP + phosphate + H(+). Its function is as follows. The RuvA-RuvB-RuvC complex processes Holliday junction (HJ) DNA during genetic recombination and DNA repair, while the RuvA-RuvB complex plays an important role in the rescue of blocked DNA replication forks via replication fork reversal (RFR). RuvA specifically binds to HJ cruciform DNA, conferring on it an open structure. The RuvB hexamer acts as an ATP-dependent pump, pulling dsDNA into and through the RuvAB complex. RuvB forms 2 homohexamers on either side of HJ DNA bound by 1 or 2 RuvA tetramers; 4 subunits per hexamer contact DNA at a time. Coordinated motions by a converter formed by DNA-disengaged RuvB subunits stimulates ATP hydrolysis and nucleotide exchange. Immobilization of the converter enables RuvB to convert the ATP-contained energy into a lever motion, pulling 2 nucleotides of DNA out of the RuvA tetramer per ATP hydrolyzed, thus driving DNA branch migration. The RuvB motors rotate together with the DNA substrate, which together with the progressing nucleotide cycle form the mechanistic basis for DNA recombination by continuous HJ branch migration. Branch migration allows RuvC to scan DNA until it finds its consensus sequence, where it cleaves and resolves cruciform DNA. The chain is Holliday junction branch migration complex subunit RuvB from Pseudomonas fluorescens (strain SBW25).